Here is a 178-residue protein sequence, read N- to C-terminus: C-phycoerythrin class 2 subunit beta (178 aa).

Phycourobilin-binding residues include cysteine 50 and cysteine 61. Residues cysteine 82 and cysteine 159 each contribute to the (2R,3E)-phycoerythrobilin site.

Belongs to the phycobiliprotein family. In terms of assembly, heterodimer of an alpha and a beta chain. Post-translationally, contains two covalently linked phycoerythrobilin chromophores and one covalently linked phycourobilin chromophore.

It is found in the cellular thylakoid membrane. Functionally, light-harvesting photosynthetic bile pigment-protein from the phycobiliprotein complex. The chain is C-phycoerythrin class 2 subunit beta (mpeB) from Synechococcus sp. (strain WH8103).